The following is a 232-amino-acid chain: 2,3-bisphosphoglycerate-dependent phosphoglycerate mutase 1 (232 aa).

Residues 8–15 (RHGQSLWN), 21–22 (TG), R58, 114–117 (ERYY), K125, 141–142 (RR), and 185–186 (GN) each bind substrate. Residue H9 is the Tele-phosphohistidine intermediate of the active site. E114 (proton donor/acceptor) is an active-site residue.

It belongs to the phosphoglycerate mutase family. BPG-dependent PGAM subfamily.

It carries out the reaction (2R)-2-phosphoglycerate = (2R)-3-phosphoglycerate. It participates in carbohydrate degradation; glycolysis; pyruvate from D-glyceraldehyde 3-phosphate: step 3/5. Functionally, catalyzes the interconversion of 2-phosphoglycerate and 3-phosphoglycerate. The chain is 2,3-bisphosphoglycerate-dependent phosphoglycerate mutase 1 from Gloeobacter violaceus (strain ATCC 29082 / PCC 7421).